Reading from the N-terminus, the 528-residue chain is UDP-glucuronosyltransferase 2A1 (528 aa).

A signal peptide spans 1–21 (MLKNILLCSLQISLLGMSLGG). Topologically, residues 22–494 (NVLIWPMEGS…FQYHSLDVIG (473 aa)) are extracellular. Asparagine 49 carries N-linked (GlcNAc...) asparagine glycosylation. Lysine 135 carries the N6-succinyllysine modification. Asparagine 314 is a glycosylation site (N-linked (GlcNAc...) asparagine). A helical transmembrane segment spans residues 495–515 (FLLACVASAILLVAKCCLFIF). Residues 516-528 (QKVGKTGKKKKRD) are Cytoplasmic-facing.

The protein belongs to the UDP-glycosyltransferase family.

The protein resides in the membrane. The enzyme catalyses glucuronate acceptor + UDP-alpha-D-glucuronate = acceptor beta-D-glucuronoside + UDP + H(+). The catalysed reaction is 16beta,17beta-estriol + UDP-alpha-D-glucuronate = 16beta,17beta-estriol 16-O-(beta-D-glucuronate) + UDP + H(+). It catalyses the reaction 16alpha,17alpha-estriol + UDP-alpha-D-glucuronate = 16alpha,17alpha-estriol 16-O-(beta-D-glucuronate) + UDP + H(+). It carries out the reaction 17alpha-estradiol + UDP-alpha-D-glucuronate = 17alpha-estradiol 17-O-(beta-D-glucuronate) + UDP + H(+). The enzyme catalyses 17alpha-estradiol + UDP-alpha-D-glucuronate = 17alpha-estradiol 3-O-(beta-D-glucuronate) + UDP + H(+). The catalysed reaction is 17beta-estradiol + UDP-alpha-D-glucuronate = 17beta-estradiol 3-O-(beta-D-glucuronate) + UDP + H(+). It catalyses the reaction 17beta-estradiol + UDP-alpha-D-glucuronate = 17beta-estradiol 17-O-(beta-D-glucuronate) + UDP + H(+). It carries out the reaction testosterone + UDP-alpha-D-glucuronate = testosterone 17-O-(beta-D-glucuronate) + UDP + H(+). The enzyme catalyses epitestosterone + UDP-alpha-D-glucuronate = epitestosterone 17-O-(beta-D-glucuronate) + UDP + H(+). The catalysed reaction is lithocholate + UDP-alpha-D-glucuronate = lithocholoyl-3-O-(beta-D-glucuronate) + UDP + H(+). It catalyses the reaction lithocholate + UDP-alpha-D-glucuronate = lithocholoyl-24-O-(beta-D-glucuronate) + UDP. It carries out the reaction deoxycholate + UDP-alpha-D-glucuronate = deoxycholoyl-24-O-(beta-D-glucuronate) + UDP. The enzyme catalyses hyodeoxycholate + UDP-alpha-D-glucuronate = hyodeoxycholate 6-O-(beta-D-glucuronate) + UDP + H(+). The catalysed reaction is hyocholate + UDP-alpha-D-glucuronate = hyocholoyl-24-O-(beta-D-glucuronate) + UDP. Functionally, UDP-glucuronosyltransferase (UGT) that catalyzes phase II biotransformation reactions in which lipophilic substrates are conjugated with glucuronic acid to increase the metabolite's water solubility, thereby facilitating excretion into either the urine or bile. Essential for the elimination and detoxification of drugs, xenobiotics and endogenous compounds. Catalyzes the glucuronidation of endogenous steroid hormones such as androgens (testosterones) and estrogens (estradiol and estriol). Contributes to bile acid (BA) detoxification by catalyzing the glucuronidation of BA substrates, which are natural detergents for dietary lipids absorption. Shows a high affinity to aliphatic odorants such as citronellol as well as olfactory tissue specificity, and therefore may be involved in olfaction. The sequence is that of UDP-glucuronosyltransferase 2A1 from Mus musculus (Mouse).